A 364-amino-acid chain; its full sequence is Flagellar P-ring protein (364 aa).

The N-terminal stretch at M1–A29 is a signal peptide.

It belongs to the FlgI family. As to quaternary structure, the basal body constitutes a major portion of the flagellar organelle and consists of four rings (L,P,S, and M) mounted on a central rod.

Its subcellular location is the periplasm. The protein resides in the bacterial flagellum basal body. Assembles around the rod to form the L-ring and probably protects the motor/basal body from shearing forces during rotation. The polypeptide is Flagellar P-ring protein (Dechloromonas aromatica (strain RCB)).